The sequence spans 472 residues: Adenosylhomocysteinase (472 aa).

Substrate-binding residues include Thr-64, Asp-138, and Glu-198. Position 199-201 (199-201) interacts with NAD(+); it reads TTT. 2 residues coordinate substrate: Lys-228 and Asp-232. Residues Asn-233, 262 to 267, Glu-285, Asn-320, 341 to 343, and Asn-386 contribute to the NAD(+) site; these read GFGDVG and IGH.

The protein belongs to the adenosylhomocysteinase family. Requires NAD(+) as cofactor.

It is found in the cytoplasm. The enzyme catalyses S-adenosyl-L-homocysteine + H2O = L-homocysteine + adenosine. The protein operates within amino-acid biosynthesis; L-homocysteine biosynthesis; L-homocysteine from S-adenosyl-L-homocysteine: step 1/1. Its function is as follows. May play a key role in the regulation of the intracellular concentration of adenosylhomocysteine. This chain is Adenosylhomocysteinase, found in Prochlorococcus marinus (strain MIT 9312).